A 213-amino-acid chain; its full sequence is Ion-translocating oxidoreductase complex subunit A (213 aa).

The Periplasmic portion of the chain corresponds to 1-24 (MLLLWQSRIMPGSEANIYITMTEY). The chain crosses the membrane as a helical span at residues 25-45 (LLLLIGTVLVNNFVLVKFLGL). Residues 46–58 (CPFMGVSKKLETA) are Cytoplasmic-facing. Residues 59–79 (IGMGLATTFVLTLASVCAYLV) form a helical membrane-spanning segment. At 80-86 (ESYVLRP) the chain is on the periplasmic side. The chain crosses the membrane as a helical span at residues 87–107 (LGIEYLRTMSFILVIAVVVQF). Residues 108–121 (TEMVVHKTSPTLYR) are Cytoplasmic-facing. Residues 122–142 (LLGIFLPLITTNCAVLGVALL) traverse the membrane as a helical segment. Residues 143–153 (NINENHNFIQS) lie on the Periplasmic side of the membrane. Residues 154-174 (IIYGFGAAVGFSLVLILFASM) form a helical membrane-spanning segment. Residues 175–190 (RERIHVADVPAPFKGA) lie on the Cytoplasmic side of the membrane. The helical transmembrane segment at 191 to 211 (SIAMITAGLMSLAFMGFTGLV) threads the bilayer. The Periplasmic segment spans residues 212-213 (KL).

The protein belongs to the NqrDE/RnfAE family. As to quaternary structure, the complex is composed of six subunits: RnfA, RnfB, RnfC, RnfD, RnfE and RnfG.

It localises to the cell inner membrane. Part of a membrane-bound complex that couples electron transfer with translocation of ions across the membrane. The polypeptide is Ion-translocating oxidoreductase complex subunit A (Vibrio cholerae serotype O1 (strain ATCC 39541 / Classical Ogawa 395 / O395)).